We begin with the raw amino-acid sequence, 702 residues long: Nucleolar and coiled-body phosphoprotein 1 (702 aa).

The LisH domain maps to 10–42; sequence VPSDLYPLVLRFLRDSQLSEVASKFAKATGATQ. At lysine 33 the chain carries N6-acetyllysine. Residues 65-635 are disordered; it reads PKVKLQSNGP…SPFRRVREEE (571 aa). Residues lysine 68 and lysine 77 each participate in a glycyl lysine isopeptide (Lys-Gly) (interchain with G-Cter in SUMO2) cross-link. Acidic serine cluster repeat units lie at residues 85 to 96 and 130 to 141; these read SSDSSEDSSEDE and ESSSSEESSEEE. The interval 85 to 566 is 11 X 12 AA approximate repeats of an acidic serine cluster; sequence SSDSSEDSSE…GKAAKESEEE (482 aa). Serine 88 is subject to Phosphoserine. Serine 89 and serine 92 each carry diphosphoserine. Phosphoserine; by CK2 is present on residues serine 89 and serine 92. A Phosphoserine modification is found at serine 93. 2 stretches are compositionally biased toward low complexity: residues 123-135 and 151-164; these read KAAA…SSSE and QQKA…AVRP. Over residues 172–188 the composition is skewed to acidic residues; it reads SESDSDSDSDSSSEEET. The stretch at 176–187 is one Acidic serine cluster 3 repeat; that stretch reads SDSDSDSSSEEE. 4 stretches are compositionally biased toward low complexity: residues 189–205, 224–235, 245–278, and 308–329; these read PQTQ…AQTK, KAAASSSSSSSS, AAPP…SSED, and LPKK…QPAD. Glycyl lysine isopeptide (Lys-Gly) (interchain with G-Cter in SUMO2) cross-links involve residues lysine 195 and lysine 201. Residues 215–390 are interaction with RPA194; that stretch reads KAQPKVANGK…EDEAPAKPVS (176 aa). Acidic serine cluster repeat units lie at residues 232-241 and 273-284; these read SSSSDDSEEE and SSSSEDSSSEEE. Positions 330 to 342 are enriched in acidic residues; it reads SSDDSSDDSDSSS. The Acidic serine cluster 6 repeat unit spans residues 334 to 345; the sequence is SSDDSDSSSEEE. Residues lysine 351 and lysine 356 each participate in a glycyl lysine isopeptide (Lys-Gly) (interchain with G-Cter in SUMO2) cross-link. Positions 353 to 362 are enriched in low complexity; the sequence is VVSKTPAKAA. Serine 371, serine 372, and serine 375 each carry phosphoserine. One copy of the Acidic serine cluster 7 repeat lies at 372–383; that stretch reads SDSSDSDSSEDE. Residues lysine 396, lysine 402, lysine 407, and lysine 413 each participate in a glycyl lysine isopeptide (Lys-Gly) (interchain with G-Cter in SUMO2) cross-link. The span at 411 to 422 shows a compositional bias: polar residues; sequence TPKQPAGSNQKP. Lysine 421 carries the post-translational modification N6-acetyllysine; alternate. Lysine 421 is covalently cross-linked (Glycyl lysine isopeptide (Lys-Gly) (interchain with G-Cter in SUMO1); alternate). Lysine 421 is covalently cross-linked (Glycyl lysine isopeptide (Lys-Gly) (interchain with G-Cter in SUMO2); alternate). Residues 431–442 form an Acidic serine cluster 8 repeat; it reads SSEEESSSSEEE. Residues 431 to 443 are compositionally biased toward acidic residues; the sequence is SSEEESSSSEEEE. Residues lysine 447 and lysine 459 each participate in a glycyl lysine isopeptide (Lys-Gly) (interchain with G-Cter in SUMO2) cross-link. Composition is skewed to low complexity over residues 447-480 and 514-525; these read KSAT…SDSS and KSSSSSSSSSSE. Acidic serine cluster repeat units lie at residues 474–484 and 521–531; these read SSDSDSSSSEE and SSSSEDSSEEE. The span at 541–554 shows a compositional bias: polar residues; the sequence is PKIQASKANGTPAS. An Acidic serine cluster 11 repeat occupies 555 to 566; sequence LNGKAAKESEEE. At serine 563 the chain carries Phosphoserine. Positions 563–572 are enriched in acidic residues; that stretch reads SEEEEEEEET. A Glycyl lysine isopeptide (Lys-Gly) (interchain with G-Cter in SUMO1) cross-link involves residue lysine 575. Lysine 582 is covalently cross-linked (Glycyl lysine isopeptide (Lys-Gly) (interchain with G-Cter in SUMO2)). Serine 585 carries the phosphoserine modification. Threonine 594 bears the Phosphothreonine mark. Lysine 607 is covalently cross-linked (Glycyl lysine isopeptide (Lys-Gly) (interchain with G-Cter in SUMO2)). Threonine 610 and threonine 613 each carry phosphothreonine. A Glycyl lysine isopeptide (Lys-Gly) (interchain with G-Cter in SUMO2) cross-link involves residue lysine 616. Serine 625 and serine 646 each carry phosphoserine. A Glycyl lysine isopeptide (Lys-Gly) (interchain with G-Cter in SUMO2) cross-link involves residue lysine 650. Residue lysine 666 is modified to N6-acetyllysine; alternate. Lysine 666 participates in a covalent cross-link: Glycyl lysine isopeptide (Lys-Gly) (interchain with G-Cter in SUMO2); alternate. The residue at position 686 (arginine 686) is an Omega-N-methylarginine. Serine 689 is subject to Phosphoserine. Lysine 698 participates in a covalent cross-link: Glycyl lysine isopeptide (Lys-Gly) (interchain with G-Cter in SUMO2). A Phosphoserine modification is found at serine 701.

This sequence belongs to the NOLC1 family. Interacts with RNA polymerase I 194 kDa subunit (RPA194) and with casein kinase-II. Interacts with DKC1/NAP57, NOP58 and fibrillarin. Post-translationally, undergoes rapid and massive phosphorylation/dephosphorylation cycles on CK2 and PKC sites. NOLC1 is one of the mostly phosphorylated proteins in the cell. In terms of processing, pyrophosphorylated by 5-diphosphoinositol pentakisphosphate (5-IP7). Serine pyrophosphorylation is achieved by Mg(2+)-dependent, but enzyme independent transfer of a beta-phosphate from a inositol pyrophosphate to a pre-phosphorylated serine residue. Ubiquitinated. Monoubiquitination by the BCR(KBTBD8) complex promotes the formation of a NOLC1-TCOF1 complex that acts as a platform to connect RNA polymerase I with enzymes responsible for ribosomal processing and modification, leading to remodel the translational program of differentiating cells in favor of neural crest specification.

Its subcellular location is the nucleus. The protein localises to the nucleolus. It localises to the cytoplasm. Nucleolar protein that acts as a regulator of RNA polymerase I by connecting RNA polymerase I with enzymes responsible for ribosomal processing and modification. Required for neural crest specification: following monoubiquitination by the BCR(KBTBD8) complex, associates with TCOF1 and acts as a platform to connect RNA polymerase I with enzymes responsible for ribosomal processing and modification, leading to remodel the translational program of differentiating cells in favor of neural crest specification. Involved in nucleologenesis, possibly by playing a role in the maintenance of the fundamental structure of the fibrillar center and dense fibrillar component in the nucleolus. It has intrinsic GTPase and ATPase activities. The polypeptide is Nucleolar and coiled-body phosphoprotein 1 (Mus musculus (Mouse)).